The primary structure comprises 648 residues: Macrolide export ATP-binding/permease protein MacB (648 aa).

An ABC transporter domain is found at 5–243; it reads LELKDIRRSY…AGGTEPVVNT (239 aa). ATP is bound at residue 41 to 48; the sequence is GASGSGKS. A run of 4 helical transmembrane segments spans residues 273 to 293, 523 to 543, 576 to 596, and 611 to 631; these read LLTM…VVVG, LFMT…VMNI, AVLV…LIAF, and PLAL…FGWL.

It belongs to the ABC transporter superfamily. Macrolide exporter (TC 3.A.1.122) family. Homodimer. Part of the tripartite efflux system MacAB-TolC, which is composed of an inner membrane transporter, MacB, a periplasmic membrane fusion protein, MacA, and an outer membrane component, TolC. The complex forms a large protein conduit and can translocate molecules across both the inner and outer membranes. Interacts with MacA.

It localises to the cell inner membrane. Its function is as follows. Part of the tripartite efflux system MacAB-TolC. MacB is a non-canonical ABC transporter that contains transmembrane domains (TMD), which form a pore in the inner membrane, and an ATP-binding domain (NBD), which is responsible for energy generation. Confers resistance against macrolides. The protein is Macrolide export ATP-binding/permease protein MacB of Escherichia coli O157:H7.